A 777-amino-acid chain; its full sequence is Cullin-3 (777 aa).

Positions 568 to 596 are disordered; that stretch reads YPPPKASMSNEENGPGPSSSGESMKERKP. Residues 576–589 show a composition bias toward low complexity; it reads SNEENGPGPSSSGE. Residues 707–769 form the Cullin neddylation domain; it reads DRKLEVEAAI…REYLARDEHD (63 aa). Lys721 participates in a covalent cross-link: Glycyl lysine isopeptide (Lys-Gly) (interchain with G-Cter in NEDD8).

It belongs to the cullin family. In terms of assembly, probable component of multiple cullin-RING-based BCB (BTB-CUL3-BTB) E3 ubiquitin-protein ligase complexes formed by cul-3, rbx-1 and a variable BTB domain-containing protein acting as both, adapter to cullin and substrate recognition component. Interacts with bath-15, bath-40, bath-41, bath-42, C17F4.8, tag-303, D2045.8, F57C2.1, ZC239.15 and B0281.5. Interacts with mel-26 (via BTB domain). Interacts with dcn-1. Post-translationally, neddylated. Deneddylated via its interaction with the COP9 signalosome (CSN) complex.

Its subcellular location is the cytoplasm. It is found in the nucleus. It functions in the pathway protein modification; protein ubiquitination. Its function is as follows. Probable core component of multiple cullin-RING-based BCB (BTB-CUL3-BTB) E3 ubiquitin-protein ligase complexes which mediate the ubiquitination and subsequent proteasomal degradation of target proteins. Probably acts as a scaffold protein which may contribute to catalysis through positioning of the substrate and the ubiquitin-conjugating enzyme. Required to target mei-3/katanin for degradation at the meiosis to mitosis transition via its neddylation and deneddylation. Functions in ubiquitin-mediated degradation of CKIs to target cki-1 for degradation. Regulates microtubule stability in the early embryo. In body wall muscles, involved in the organization of myosin thick filaments, likely by regulating the degradation of microtubule severing protein mei-1 downstream of unc-89. Together with spop-1, may promote the ubiquitination and proteasomal degradation of target bromodomain-containing proteins such as bet-1. The polypeptide is Cullin-3 (Caenorhabditis elegans).